A 232-amino-acid chain; its full sequence is Ubiquinone biosynthesis O-methyltransferase (232 aa).

S-adenosyl-L-methionine contacts are provided by Arg36, Gly55, Asp76, and Leu120.

The protein belongs to the methyltransferase superfamily. UbiG/COQ3 family.

It catalyses the reaction a 3-demethylubiquinol + S-adenosyl-L-methionine = a ubiquinol + S-adenosyl-L-homocysteine + H(+). The enzyme catalyses a 3-(all-trans-polyprenyl)benzene-1,2-diol + S-adenosyl-L-methionine = a 2-methoxy-6-(all-trans-polyprenyl)phenol + S-adenosyl-L-homocysteine + H(+). The protein operates within cofactor biosynthesis; ubiquinone biosynthesis. Functionally, O-methyltransferase that catalyzes the 2 O-methylation steps in the ubiquinone biosynthetic pathway. The polypeptide is Ubiquinone biosynthesis O-methyltransferase (Pseudomonas fluorescens (strain ATCC BAA-477 / NRRL B-23932 / Pf-5)).